The chain runs to 99 residues: MALTLTDVTRIAHLARLEMADADAERTLTQLNEFFGLVEQMQAVDTTGIAPLAHPIEQILEVAQRLREDAVTEHVNRDDNQRPAPAVQDGLYLVPKVIE.

Belongs to the GatC family. Heterotrimer of A, B and C subunits.

The catalysed reaction is L-glutamyl-tRNA(Gln) + L-glutamine + ATP + H2O = L-glutaminyl-tRNA(Gln) + L-glutamate + ADP + phosphate + H(+). The enzyme catalyses L-aspartyl-tRNA(Asn) + L-glutamine + ATP + H2O = L-asparaginyl-tRNA(Asn) + L-glutamate + ADP + phosphate + 2 H(+). Allows the formation of correctly charged Asn-tRNA(Asn) or Gln-tRNA(Gln) through the transamidation of misacylated Asp-tRNA(Asn) or Glu-tRNA(Gln) in organisms which lack either or both of asparaginyl-tRNA or glutaminyl-tRNA synthetases. The reaction takes place in the presence of glutamine and ATP through an activated phospho-Asp-tRNA(Asn) or phospho-Glu-tRNA(Gln). This chain is Aspartyl/glutamyl-tRNA(Asn/Gln) amidotransferase subunit C, found in Burkholderia mallei (strain NCTC 10247).